A 298-amino-acid chain; its full sequence is Urease accessory protein UreD (298 aa).

This sequence belongs to the UreD family. As to quaternary structure, ureD, UreF and UreG form a complex that acts as a GTP-hydrolysis-dependent molecular chaperone, activating the urease apoprotein by helping to assemble the nickel containing metallocenter of UreC. The UreE protein probably delivers the nickel.

Its subcellular location is the cytoplasm. In terms of biological role, required for maturation of urease via the functional incorporation of the urease nickel metallocenter. The chain is Urease accessory protein UreD from Frankia alni (strain DSM 45986 / CECT 9034 / ACN14a).